Consider the following 144-residue polypeptide: Small ribosomal subunit protein bS6 (144 aa).

Residues 97 to 144 (DTEQSLIMKSKDEKGDKPERSERRRRDDEEVDAAPAATDTDGDNAEAA) are disordered. The span at 105-124 (KSKDEKGDKPERSERRRRDD) shows a compositional bias: basic and acidic residues.

It belongs to the bacterial ribosomal protein bS6 family.

Functionally, binds together with bS18 to 16S ribosomal RNA. This is Small ribosomal subunit protein bS6 from Xanthomonas campestris pv. campestris (strain B100).